A 518-amino-acid chain; its full sequence is Protein nucleotidyltransferase YdiU (518 aa).

The tract at residues 1 to 22 (MTHLQFDNRLRAELPGDPEEGP) is disordered. ATP contacts are provided by Gly-100, Gly-102, Arg-103, Lys-123, Asp-135, Gly-136, Arg-193, and Arg-200. The active-site Proton acceptor is the Asp-270. Residues Asn-271 and Asp-280 each contribute to the Mg(2+) site. Asp-280 is a binding site for ATP.

The protein belongs to the SELO family. Requires Mg(2+) as cofactor. Mn(2+) is required as a cofactor.

The enzyme catalyses L-seryl-[protein] + ATP = 3-O-(5'-adenylyl)-L-seryl-[protein] + diphosphate. The catalysed reaction is L-threonyl-[protein] + ATP = 3-O-(5'-adenylyl)-L-threonyl-[protein] + diphosphate. It catalyses the reaction L-tyrosyl-[protein] + ATP = O-(5'-adenylyl)-L-tyrosyl-[protein] + diphosphate. It carries out the reaction L-histidyl-[protein] + UTP = N(tele)-(5'-uridylyl)-L-histidyl-[protein] + diphosphate. The enzyme catalyses L-seryl-[protein] + UTP = O-(5'-uridylyl)-L-seryl-[protein] + diphosphate. The catalysed reaction is L-tyrosyl-[protein] + UTP = O-(5'-uridylyl)-L-tyrosyl-[protein] + diphosphate. In terms of biological role, nucleotidyltransferase involved in the post-translational modification of proteins. It can catalyze the addition of adenosine monophosphate (AMP) or uridine monophosphate (UMP) to a protein, resulting in modifications known as AMPylation and UMPylation. This is Protein nucleotidyltransferase YdiU from Xanthomonas campestris pv. campestris (strain 8004).